The chain runs to 135 residues: Dihydromethanopterin reductase (135 aa).

NADP(+)-binding positions include A9, 16-21 (LGLNGH), 52-54 (PKT), and 93-97 (GGIAV).

As to quaternary structure, homodimer.

It carries out the reaction 5,6,7,8-tetrahydromethanopterin + NAD(+) = 7,8-dihydromethanopterin + NADH + H(+). The enzyme catalyses 5,6,7,8-tetrahydromethanopterin + NADP(+) = 7,8-dihydromethanopterin + NADPH + H(+). It participates in cofactor biosynthesis; 5,6,7,8-tetrahydromethanopterin biosynthesis. Functionally, catalyzes the reduction of dihydromethanopterin (H(2)MPT) to tetrahydromethanopterin (H(4)MPT). Shows preference for NADPH rather than NADH as electron donor. Does not reduce dihydrofolate. The sequence is that of Dihydromethanopterin reductase (dmrA) from Methylorubrum extorquens (strain ATCC 14718 / DSM 1338 / JCM 2805 / NCIMB 9133 / AM1) (Methylobacterium extorquens).